Reading from the N-terminus, the 31-residue chain is L-amino-acid oxidase (31 aa).

This sequence belongs to the flavin monoamine oxidase family. FIG1 subfamily. As to quaternary structure, homodimer; non-covalently linked. It depends on FAD as a cofactor. Post-translationally, N-glycosylated. In terms of tissue distribution, expressed by the venom gland.

The protein localises to the secreted. It carries out the reaction an L-alpha-amino acid + O2 + H2O = a 2-oxocarboxylate + H2O2 + NH4(+). The catalysed reaction is L-leucine + O2 + H2O = 4-methyl-2-oxopentanoate + H2O2 + NH4(+). It catalyses the reaction L-phenylalanine + O2 + H2O = 3-phenylpyruvate + H2O2 + NH4(+). The enzyme catalyses L-histidine + O2 + H2O = 3-(imidazol-5-yl)pyruvate + H2O2 + NH4(+). Catalyzes an oxidative deamination of predominantly hydrophobic and aromatic L-amino acids, thus producing hydrogen peroxide that may contribute to the diverse toxic effects of this enzyme. Is moderately active on L-Leu, L-His, and L-Phe, and very weakly active on L-Thr, and L-Cys. Exhibits diverse biological activities, such as hemorrhage, hemolysis, edema, antibacterial and antiparasitic activities, as well as regulation of platelet aggregation. Its effect on platelets is controversial, since it either induces aggregation or inhibits agonist-induced aggregation. These different effects are probably due to different experimental conditions. Inhibits growth of B.subtilis strain ATCC 6633 (MIC=32 uM), E.faecalis strain ATCC 12953 (MIC=32 uM), S.aureus strain ATCC 29213 (MIC=32 uM), S.pyogenes strain ATCC 19615 (MIC=8 uM), E.coli strain ATCC 8739 (MIC=4 uM), K.pneumoniae strain ATCC 13885 (MIC=2 uM), P.mirabilis strain ATCC 25933 (MIC=2 uM), P.aeruginosa strain ATCC 15442 (MIC=8 uM) and S.typhimurium strain ATCC 14028 (MIC=8 uM). The sequence is that of L-amino-acid oxidase from Bothrops mattogrossensis (Pitviper).